The sequence spans 141 residues: ATP synthase epsilon chain (141 aa).

The protein belongs to the ATPase epsilon chain family. F-type ATPases have 2 components, CF(1) - the catalytic core - and CF(0) - the membrane proton channel. CF(1) has five subunits: alpha(3), beta(3), gamma(1), delta(1), epsilon(1). CF(0) has three main subunits: a, b and c.

Its subcellular location is the cell inner membrane. Its function is as follows. Produces ATP from ADP in the presence of a proton gradient across the membrane. This chain is ATP synthase epsilon chain, found in Cellvibrio japonicus (strain Ueda107) (Pseudomonas fluorescens subsp. cellulosa).